Consider the following 1290-residue polypeptide: MSSECDVGSSKAVVNGLASGNHGPDKDMDPTKICTGKGTVTLRASSSYRGTPSSSPVSPQESPKHESKSGLEPEDPSADEWKLSSSADTNGNAQPSPLAAKGYRSVHPSLSADKPQGSPLLNEVSSSHIETDSQDFPPTSRPSSAYPSTTIVNPTIVLLQHNRDPASERRAGEQDPVPTPAELTSPGRASERRAKDASRRVVRSAQDLSDVSTDEVGIPLRNTERSKDWYKTMFKQIHKLNRDDDSDVHSPRYSFSDDTKSPLSVPRSKSEMNYIEGEKVVKRSATLPLPARSSSLKSSPERNDWEPLDKKVDTRKYRAEPKSIYEYQPGKSSVLTNEKMSRDISPEEIDLKNEPWYKFFSELEFGRPTNLEKDLSFCQAELEADLEKVETVNKSPSANSPQSSAVSPTPDITSEPPGYIYSSNFHAVKRESDGTPGGLASLENERQIYKSVLEGGDIPLQGLSGLKRPSSSASTKVDRKGGNAHMISSSSVHSRTFHTSNALGPGCKHKKPLSAAKACISEILPSKFKPRLSAPSALLQEQKSVLLPSEKAQSCENLCVSLNDSKRGLPLRVGGSIENLLMRSRRDYDSKSSSTMSLQEYGTSSRRPCPLSRKAGLHFSMFYRDMHQINRAGLSLGSISSSSVRDLASHFERSSLTLARGELGASQEGSEHIPKHTVSSRITAFEQLIQRSRSMPSLDFSGRLSKSPTPVLSRSGLTSARSAESLLESTKLRPREMDGMDSGGVYASPTCSNMADHALSFRSLVPSEPLSICSDELDHCSNVSNDSREGSGGSVHGDFPKHRLNKCKGTCPASYTRFTTIRKHEQQSSRQSDWRSDSRGDKNSLLRNIHLMSPLPFRLKKPLQQHPRQPPPSDSSESPAGQKADLPCHDPQDQPHSAGKPQVPTRLSSRHTMARLSHNSEPPLDRPAGLEDCTRAINNGNPVPYSDHGLDRNNNPQSELAAAHGDSESPRHFIPADYLESTEEFIRRRHDDKEKLLADQRRLKREQEEADIAARRHTGVIPTHHQFITNERFGDLLNIDDTAKRKSGLEMRPARAKFDFKAQTLKELPLQKGDVVYIYRQIDQNWYEGEHHGRVGIFPRTYIELLPPAEKAQPRKLAPVQVLEYGEAIAKFNFNGDTQVEMSFRKGERITLLRQVDENWYEGRIPGTSRQGIFPITYVDVLKRPLVKTPVDYIDLPYSSSPSRSATVSPQQPQAQQRRVTPDRSQPSLDLCSYQALYSYVPQNDDELELRDGDIVDVMEKCDDGWFVGTSRRTRQFGTFPGNYVKPLYL.

3 disordered regions span residues 1–211 (MSSE…LSDV), 238–271 (HKLNRDDDSDVHSPRYSFSDDTKSPLSVPRSKSE), and 286–313 (TLPLPARSSSLKSSPERNDWEPLDKKVD). Over residues 45 to 61 (SSSYRGTPSSSPVSPQE) the composition is skewed to low complexity. A Phosphothreonine modification is found at Thr-51. A phosphoserine mark is found at Ser-55, Ser-58, and Ser-62. Over residues 62 to 71 (SPKHESKSGL) the composition is skewed to basic and acidic residues. Polar residues-rich tracts occupy residues 83–95 (LSSSADTNGNAQP) and 123–153 (EVSSSHIETDSQDFPPTSRPSSAYPSTTIVN). Basic and acidic residues predominate over residues 161–173 (HNRDPASERRAGE). Asp-164 and Asp-175 each carry phosphoserine. Position 179 is a phosphothreonine (Thr-179). Phosphoserine occurs at positions 185, 194, 204, 209, 254, 261, 270, and 288. A compositionally biased stretch (basic and acidic residues) spans 189-199 (ASERRAKDASR). The SoHo domain occupies 202–247 (VRSAQDLSDVSTDEVGIPLRNTERSKDWYKTMFKQIHKLNRDDDSD). Residues 240 to 260 (LNRDDDSDVHSPRYSFSDDTK) show a composition bias toward basic and acidic residues. Residues 299–313 (SPERNDWEPLDKKVD) show a composition bias toward basic and acidic residues. Tyr-325 is modified (phosphotyrosine; by ABL1). Residues Ser-345, Pro-346, Tyr-357, Ser-376, and Ser-407 each carry the phosphoserine modification. Residues 389–416 (VETVNKSPSANSPQSSAVSPTPDITSEP) form a disordered region. Positions 392–412 (VNKSPSANSPQSSAVSPTPDI) are enriched in polar residues. Residue Tyr-421 is modified to Phosphotyrosine; by ABL1. Residues Ser-432 and Ser-470 each carry the phosphoserine modification. 6 disordered regions span residues 463–482 (LSGLKRPSSSASTKVDRKGG), 588–607 (YDSKSSSTMSLQEYGTSSRR), 697–739 (SLDF…EMDG), 783–803 (VSNDSREGSGGSVHGDFPKHR), 822–841 (RKHEQQSSRQSDWRSDSRGD), and 862–972 (PLQQ…SPRH). Thr-475 carries the post-translational modification Phosphothreonine. Composition is skewed to polar residues over residues 595-606 (TMSLQEYGTSSR) and 704-722 (LSKSPTPVLSRSGLTSARS). Ser-969 carries the post-translational modification Phosphoserine. 2 SH3 domains span residues 1049 to 1108 (LEMR…LLPP) and 1123 to 1184 (LEYG…VLKR). Thr-1189 is modified (phosphothreonine). Tyr-1193 and Tyr-1198 each carry phosphotyrosine. The span at 1198–1210 (YSSSPSRSATVSP) shows a compositional bias: low complexity. The tract at residues 1198-1227 (YSSSPSRSATVSPQQPQAQQRRVTPDRSQP) is disordered. Phosphoserine occurs at positions 1201 and 1209. Positions 1211 to 1227 (QQPQAQQRRVTPDRSQP) are enriched in polar residues. The 62-residue stretch at 1229-1290 (LDLCSYQALY…PGNYVKPLYL (62 aa)) folds into the SH3 3 domain. Tyr-1238 bears the Phosphotyrosine; by ABL1 mark.

In terms of assembly, interacts (via SH3 domain 2) with PXN. Interacts with the long isoform of AFDN and with VCL. AFDN and VCL bind to SORBS1 in a competitive manner and do not form a ternary complex. Interacts with ABL1, CBL, CBLB and INPPL1/SHIP2 through the third SH3 domain. Interaction with ABL1 occurs only after insulin stimulation while this has no effect on the interaction with INPPL1. Interacts with the insulin receptor but dissociates from it following insulin stimulation. Also interacts with SCA7, PTK2/FAK1 and flotillin. Interacts (via third SH3 domain) with the Ten-1 ICD form of TENM1; the interaction induces the translocation of SORBS1 to the nucleus. Interacts with INSM1. O-glycosylated. Expressed in all tissues tested: heart, brain, spleen, lung, liver, muscle, kidney and testis. Expressed in 3T3-L1 adipocytes but not in 3T3-L1 fibroblasts.

Its subcellular location is the cell junction. The protein localises to the adherens junction. It localises to the cell membrane. The protein resides in the cytoplasm. It is found in the cytoskeleton. Its subcellular location is the focal adhesion. The protein localises to the nucleus. It localises to the nucleus matrix. Functionally, plays a role in tyrosine phosphorylation of CBL by linking CBL to the insulin receptor. Required for insulin-stimulated glucose transport. Involved in formation of actin stress fibers and focal adhesions. This Mus musculus (Mouse) protein is Sorbin and SH3 domain-containing protein 1.